Consider the following 641-residue polypeptide: Protein GAMETE EXPRESSED 3 (641 aa).

A signal peptide spans 1–29 (MVAFRFVYIPLPFFFFFFFFFVFFSGVSQ). Residues 441 to 461 (IIWFLLFEFVIMVLFAALVRF) traverse the membrane as a helical segment. The disordered stretch occupies residues 570-627 (ITIFQTPSDESSSEESYRDEHYDDVADDEHDEDDLDRKQKGKLLAHSEGSSNDGDGIA). Positions 584 to 593 (ESYRDEHYDD) are enriched in basic and acidic residues. The span at 594–603 (VADDEHDEDD) shows a compositional bias: acidic residues.

As to expression, expressed in mature siliques and in pollen, mainly in the sperm cells. Detected in the egg cell within the female gametophyte.

Its subcellular location is the cell membrane. Its function is as follows. Required for micropylar pollen tube guidance. Plays a role during early embryo patterning. In Arabidopsis thaliana (Mouse-ear cress), this protein is Protein GAMETE EXPRESSED 3 (GEX3).